Reading from the N-terminus, the 415-residue chain is Ornithine cyclodeaminase (415 aa).

9 residues coordinate NAD(+): asparagine 241, alanine 242, aspartate 320, threonine 352, leucine 354, histidine 355, aspartate 373, aspartate 396, and valine 397.

Belongs to the AgrE/ArgZ ornithine cyclodeaminase family. NAD(+) is required as a cofactor.

It catalyses the reaction L-ornithine = L-proline + NH4(+). Its function is as follows. Catalyzes the conversion of ornithine to proline, with the release of ammonia. This is Ornithine cyclodeaminase from Methanococcus maripaludis (strain DSM 14266 / JCM 13030 / NBRC 101832 / S2 / LL).